The sequence spans 266 residues: Elongator complex protein 6 (266 aa).

Belongs to the ELP6 family. As to quaternary structure, component of the elongator complex which consists of ELP1, ELP2, ELP3, ELP4, ELP5 and ELP6.

It is found in the cytoplasm. Its subcellular location is the nucleus. The protein operates within tRNA modification; 5-methoxycarbonylmethyl-2-thiouridine-tRNA biosynthesis. Its function is as follows. Component of the elongator complex which is required for multiple tRNA modifications, including mcm5U (5-methoxycarbonylmethyl uridine), mcm5s2U (5-methoxycarbonylmethyl-2-thiouridine), and ncm5U (5-carbamoylmethyl uridine). The elongator complex catalyzes formation of carboxymethyluridine in the wobble base at position 34 in tRNAs. Involved in cell migration. The polypeptide is Elongator complex protein 6 (Homo sapiens (Human)).